The primary structure comprises 243 residues: Anti-H(O) lectin 2 (243 aa).

A glycan (N-linked (GlcNAc...) asparagine) is linked at Asn115. Positions 127 and 129 each coordinate Mn(2+). Residues Asp129, Asn136, and Asp139 each coordinate Ca(2+). Mn(2+) contacts are provided by Asp139 and His144.

This sequence belongs to the leguminous lectin family. Homodimer.

Functionally, lactose- or galactose-binding anti-H(O) lectin. The protein is Anti-H(O) lectin 2 of Cytisophyllum sessilifolium (Sessile-leaved cytisus).